A 283-amino-acid polypeptide reads, in one-letter code: Galactooligosaccharides transport system permease protein GanQ (283 aa).

The next 6 membrane-spanning stretches (helical) occupy residues 13–33 (LLFS…PLLW), 82–102 (ISLF…YAFS), 115–135 (LFLL…FVLA), 137–157 (ILGM…GLIP), 188–208 (IFFQ…AMNG), and 248–268 (TTFA…FIML). The ABC transmembrane type-1 domain maps to 76–268 (YVNSMKISLF…IPVAVIFIML (193 aa)).

The protein belongs to the binding-protein-dependent transport system permease family. As to quaternary structure, the complex is composed of two ATP-binding proteins (MsmX), two transmembrane proteins (GanP and GanQ) and a solute-binding protein (GanS).

The protein resides in the cell membrane. Involved in galactan degradation. Part of the ABC transporter complex GanPQS involved in the uptake of galactooligosaccharides. Responsible for the translocation of the substrate across the membrane. The sequence is that of Galactooligosaccharides transport system permease protein GanQ (ganQ) from Bacillus subtilis (strain 168).